The primary structure comprises 206 residues: Large ribosomal subunit protein uL4 (206 aa).

Positions 63–94 (MYKQKGTGRARHHSARAPQFRGGGKAHGPVVR) are disordered. Over residues 64-77 (YKQKGTGRARHHSA) the composition is skewed to basic residues.

The protein belongs to the universal ribosomal protein uL4 family. As to quaternary structure, part of the 50S ribosomal subunit.

In terms of biological role, one of the primary rRNA binding proteins, this protein initially binds near the 5'-end of the 23S rRNA. It is important during the early stages of 50S assembly. It makes multiple contacts with different domains of the 23S rRNA in the assembled 50S subunit and ribosome. Functionally, forms part of the polypeptide exit tunnel. This chain is Large ribosomal subunit protein uL4, found in Mesorhizobium japonicum (strain LMG 29417 / CECT 9101 / MAFF 303099) (Mesorhizobium loti (strain MAFF 303099)).